A 230-amino-acid polypeptide reads, in one-letter code: Somatolactin (230 aa).

The first 25 residues, 1–25 (MHTKVLQQGLWALLLWPHLFTVSVP), serve as a signal peptide directing secretion. Cystine bridges form between Cys28–Cys38, Cys88–Cys204, and Cys221–Cys229. Asn144 carries N-linked (GlcNAc...) asparagine glycosylation.

This sequence belongs to the somatotropin/prolactin family.

It localises to the secreted. Its function is as follows. Selectively regulates proliferation and morphogenesis of neural-crest derived pigment cells. This is Somatolactin from Oryzias latipes (Japanese rice fish).